A 453-amino-acid chain; its full sequence is Allantoinase (453 aa).

Residues His-59, His-61, Lys-146, His-186, His-242, and Asp-315 each contribute to the Zn(2+) site. Lys-146 bears the N6-carboxylysine mark.

Belongs to the metallo-dependent hydrolases superfamily. Allantoinase family. In terms of assembly, homotetramer. Zn(2+) is required as a cofactor. Carboxylation allows a single lysine to coordinate two zinc ions.

It catalyses the reaction (S)-allantoin + H2O = allantoate + H(+). Its pathway is nitrogen metabolism; (S)-allantoin degradation; allantoate from (S)-allantoin: step 1/1. Catalyzes the conversion of allantoin (5-ureidohydantoin) to allantoic acid by hydrolytic cleavage of the five-member hydantoin ring. In Escherichia coli (strain 55989 / EAEC), this protein is Allantoinase.